Here is a 500-residue protein sequence, read N- to C-terminus: Probable cytosol aminopeptidase (500 aa).

Positions 265 and 270 each coordinate Mn(2+). Residue K277 is part of the active site. Positions 288, 347, and 349 each coordinate Mn(2+). R351 is a catalytic residue.

This sequence belongs to the peptidase M17 family. Requires Mn(2+) as cofactor.

It is found in the cytoplasm. It carries out the reaction Release of an N-terminal amino acid, Xaa-|-Yaa-, in which Xaa is preferably Leu, but may be other amino acids including Pro although not Arg or Lys, and Yaa may be Pro. Amino acid amides and methyl esters are also readily hydrolyzed, but rates on arylamides are exceedingly low.. The catalysed reaction is Release of an N-terminal amino acid, preferentially leucine, but not glutamic or aspartic acids.. Functionally, presumably involved in the processing and regular turnover of intracellular proteins. Catalyzes the removal of unsubstituted N-terminal amino acids from various peptides. The sequence is that of Probable cytosol aminopeptidase from Rickettsia rickettsii (strain Iowa).